The primary structure comprises 441 residues: Peroxisome proliferator-activated receptor delta (441 aa).

The interval 1 to 58 (MEQPPGEAAEVREEEEKKEVAEAEGAPELNGGPERSLPSSSYTDLSRSSSPPSLLDQL) is disordered. A compositionally biased stretch (basic and acidic residues) spans 9–21 (AEVREEEEKKEVA). Residues 36-55 (SLPSSSYTDLSRSSSPPSLL) show a composition bias toward low complexity. The nuclear receptor DNA-binding region spans 70–145 (LNMECRVCGD…LGMSHNAIRF (76 aa)). 2 NR C4-type zinc fingers span residues 74-94 (CRVC…CEGC) and 111-133 (CERI…FQKC). One can recognise an NR LBD domain in the interval 211 to 439 (FVIHDIETLW…HPLLQEIYKD (229 aa)).

The protein belongs to the nuclear hormone receptor family. NR1 subfamily. Heterodimer with the retinoid X receptor. Interacts (via domain NR LBD) with CRY1 and CRY2 in a ligand-dependent manner. 'Lys-48'-linked polyubiquitinated; leading to proteasomal degradation. Deubiquitinated and stabilized by OTUD3.

It is found in the nucleus. In terms of biological role, ligand-activated transcription factor key mediator of energy metabolism in adipose tissues. Receptor that binds peroxisome proliferators such as hypolipidemic drugs and fatty acids. Has a preference for poly-unsaturated fatty acids, such as gamma-linoleic acid and eicosapentanoic acid. Once activated by a ligand, the receptor binds to promoter elements of target genes. Regulates the peroxisomal beta-oxidation pathway of fatty acids. Functions as a transcription activator for the acyl-CoA oxidase gene. Decreases expression of NPC1L1 once activated by a ligand. In Canis lupus familiaris (Dog), this protein is Peroxisome proliferator-activated receptor delta (PPARD).